Consider the following 660-residue polypeptide: ATPase-like fidgetin (660 aa).

Disordered stretches follow at residues 141 to 186 and 209 to 334; these read KQIY…EDPF and ALSS…ADSK. The span at 145-161 shows a compositional bias: low complexity; it reads SKHSPPSTSTSSIVSSS. Ser177 carries the post-translational modification Phosphoserine. Residues 213–239 are compositionally biased toward polar residues; it reads DTGRSATMNSTTFPTAMKSQSTTKPTL. Residues 240–255 show a composition bias toward low complexity; the sequence is SNSVSSPSIQVSNNQN. Over residues 301–313 the composition is skewed to polar residues; the sequence is LNSSHDTLGSSTR. Low complexity predominate over residues 314-333; sequence PSSADTAGSPATSPPATADS. Residue 419–426 participates in ATP binding; that stretch reads GPPGTGKT.

It belongs to the AAA ATPase family.

The protein localises to the nucleus. In Schizosaccharomyces pombe (strain 972 / ATCC 24843) (Fission yeast), this protein is ATPase-like fidgetin (alf1).